The chain runs to 198 residues: Nicotinamidase 3 (198 aa).

The protein belongs to the isochorismatase family.

The catalysed reaction is nicotinamide + H2O = nicotinate + NH4(+). Its pathway is cofactor biosynthesis; nicotinate biosynthesis; nicotinate from nicotinamide: step 1/1. Functionally, catalyzes the deamidation of nicotinamide, an early step in the NAD(+) salvage pathway. Prevents the accumulation of intracellular nicotinamide, a known inhibitor of poly(ADP-ribose) polymerases (PARP enzymes). This chain is Nicotinamidase 3, found in Arabidopsis thaliana (Mouse-ear cress).